Reading from the N-terminus, the 31-residue chain is Alpha-conotoxin Li1.12 (31 aa).

The propeptide occupies 1-15 (AGNAKMSALMALTIR). 2 disulfide bridges follow: C17–C23 and C18–C30. C30 carries the post-translational modification Cysteine amide.

The protein belongs to the conotoxin A superfamily. In terms of tissue distribution, expressed by the venom duct.

It is found in the secreted. Alpha-conotoxins act on postsynaptic membranes, they bind to the nicotinic acetylcholine receptors (nAChR) and thus inhibit them. This toxin inhibits alpha-3-beta-4, alpha-6/alpha-3-beta-4, and alpha-2-beta-4 nAChRs. This is Alpha-conotoxin Li1.12 from Conus lividus (Livid cone).